We begin with the raw amino-acid sequence, 165 residues long: Crossover junction endodeoxyribonuclease RuvC (165 aa).

Catalysis depends on residues Asp-6, Glu-67, and Asp-142. Residues Asp-6, Glu-67, and Asp-142 each coordinate Mg(2+).

This sequence belongs to the RuvC family. Homodimer which binds Holliday junction (HJ) DNA. The HJ becomes 2-fold symmetrical on binding to RuvC with unstacked arms; it has a different conformation from HJ DNA in complex with RuvA. In the full resolvosome a probable DNA-RuvA(4)-RuvB(12)-RuvC(2) complex forms which resolves the HJ. Mg(2+) serves as cofactor.

Its subcellular location is the cytoplasm. It carries out the reaction Endonucleolytic cleavage at a junction such as a reciprocal single-stranded crossover between two homologous DNA duplexes (Holliday junction).. In terms of biological role, the RuvA-RuvB-RuvC complex processes Holliday junction (HJ) DNA during genetic recombination and DNA repair. Endonuclease that resolves HJ intermediates. Cleaves cruciform DNA by making single-stranded nicks across the HJ at symmetrical positions within the homologous arms, yielding a 5'-phosphate and a 3'-hydroxyl group; requires a central core of homology in the junction. The consensus cleavage sequence is 5'-(A/T)TT(C/G)-3'. Cleavage occurs on the 3'-side of the TT dinucleotide at the point of strand exchange. HJ branch migration catalyzed by RuvA-RuvB allows RuvC to scan DNA until it finds its consensus sequence, where it cleaves and resolves the cruciform DNA. The chain is Crossover junction endodeoxyribonuclease RuvC from Chlamydia abortus (strain DSM 27085 / S26/3) (Chlamydophila abortus).